Here is a 239-residue protein sequence, read N- to C-terminus: Small ribosomal subunit protein uS2 (239 aa).

It belongs to the universal ribosomal protein uS2 family.

This Francisella tularensis subsp. holarctica (strain FTNF002-00 / FTA) protein is Small ribosomal subunit protein uS2.